A 450-amino-acid polypeptide reads, in one-letter code: UDP-N-acetylmuramoylalanine--D-glutamate ligase (450 aa).

Residue 116–122 coordinates ATP; sequence GSNGKTT.

The protein belongs to the MurCDEF family.

Its subcellular location is the cytoplasm. The catalysed reaction is UDP-N-acetyl-alpha-D-muramoyl-L-alanine + D-glutamate + ATP = UDP-N-acetyl-alpha-D-muramoyl-L-alanyl-D-glutamate + ADP + phosphate + H(+). It functions in the pathway cell wall biogenesis; peptidoglycan biosynthesis. Its function is as follows. Cell wall formation. Catalyzes the addition of glutamate to the nucleotide precursor UDP-N-acetylmuramoyl-L-alanine (UMA). This is UDP-N-acetylmuramoylalanine--D-glutamate ligase from Dechloromonas aromatica (strain RCB).